We begin with the raw amino-acid sequence, 247 residues long: tRNA (guanine-N(1)-)-methyltransferase (247 aa).

S-adenosyl-L-methionine contacts are provided by residues Gly113 and 133-138 (IGDFVM).

It belongs to the RNA methyltransferase TrmD family. As to quaternary structure, homodimer.

The protein resides in the cytoplasm. The catalysed reaction is guanosine(37) in tRNA + S-adenosyl-L-methionine = N(1)-methylguanosine(37) in tRNA + S-adenosyl-L-homocysteine + H(+). Functionally, specifically methylates guanosine-37 in various tRNAs. In Vibrio campbellii (strain ATCC BAA-1116), this protein is tRNA (guanine-N(1)-)-methyltransferase.